The sequence spans 407 residues: Peptidase T (407 aa).

H78 is a binding site for Zn(2+). D80 is a catalytic residue. Residue D139 participates in Zn(2+) binding. The active-site Proton acceptor is E173. Positions 174, 196, and 378 each coordinate Zn(2+).

This sequence belongs to the peptidase M20B family. Zn(2+) is required as a cofactor.

The protein localises to the cytoplasm. The catalysed reaction is Release of the N-terminal residue from a tripeptide.. Cleaves the N-terminal amino acid of tripeptides. The sequence is that of Peptidase T from Macrococcus caseolyticus (strain JCSC5402) (Macrococcoides caseolyticum).